The sequence spans 287 residues: 4,4'-diapophytoene synthase (287 aa).

(2E,6E)-farnesyl diphosphate-binding positions include 18–21 (HSKS), Tyr41, and Arg45. Mg(2+)-binding residues include Asp48 and Asp52. A (2E,6E)-farnesyl diphosphate-binding site is contributed by Gln165. Asn168 contributes to the Mg(2+) binding site. Arg171 is a (2E,6E)-farnesyl diphosphate binding site. Asp172 is a Mg(2+) binding site. Tyr248 serves as a coordination point for (2E,6E)-farnesyl diphosphate.

It belongs to the phytoene/squalene synthase family. CrtM subfamily. Mg(2+) serves as cofactor.

It catalyses the reaction 2 (2E,6E)-farnesyl diphosphate = 15-cis-4,4'-diapophytoene + 2 diphosphate. It participates in carotenoid biosynthesis; staphyloxanthin biosynthesis; staphyloxanthin from farnesyl diphosphate: step 1/5. In terms of biological role, involved in the biosynthesis of the yellow-orange carotenoid staphyloxanthin, which plays a role in the virulence via its protective function against oxidative stress. Catalyzes the head-to-head condensation of two molecules of farnesyl diphosphate (FPP) into the colorless C(30) carotenoid 4,4'-diapophytoene (dehydrosqualene). The sequence is that of 4,4'-diapophytoene synthase (crtM) from Staphylococcus aureus (strain Mu50 / ATCC 700699).